The primary structure comprises 177 residues: Large ribosomal subunit protein uL6 (177 aa).

The protein belongs to the universal ribosomal protein uL6 family. As to quaternary structure, part of the 50S ribosomal subunit.

In terms of biological role, this protein binds to the 23S rRNA, and is important in its secondary structure. It is located near the subunit interface in the base of the L7/L12 stalk, and near the tRNA binding site of the peptidyltransferase center. This Serratia proteamaculans (strain 568) protein is Large ribosomal subunit protein uL6.